The sequence spans 509 residues: Dye-decolorizing peroxidase AauDyP1 (509 aa).

The first 22 residues, 1–22, serve as a signal peptide directing secretion; sequence MRLSPVFVALLSGLLAADLGLA. A propeptide spanning residues 23–61 is cleaved from the precursor; sequence RSVAPRVADSPAAVTGTRKTSLLKNVAGLPPVPSAAQVA. Residue Asp229 is the Proton acceptor of the active site. Asn343 carries N-linked (GlcNAc...) asparagine glycosylation. His365 contributes to the heme binding site. N-linked (GlcNAc...) asparagine glycans are attached at residues Asn383, Asn410, and Asn476.

It belongs to the DyP-type peroxidase family. Heme b is required as a cofactor.

The protein localises to the secreted. The catalysed reaction is Reactive Blue 5 + 2 H2O2 = 2,2'-disulfonyl azobenzene + 3-[(4-amino-6-chloro-1,3,5-triazin-2-yl)amino]benzenesulfonate + phthalate + 2 H2O + 2 H(+). It catalyses the reaction 2 a phenolic donor + H2O2 = 2 a phenolic radical donor + 2 H2O. Inhibited by imidazole. Functionally, manganese-independent peroxidase that is able to convert a large number of compounds, but its physiological substrate is not known. In addition to classic peroxidase substrates (e.g. 2,6-dimethoxyphenol), oxidizes dyes such as Reactive Blue 5 and Reactive Black 5. The sequence is that of Dye-decolorizing peroxidase AauDyP1 from Auricularia auricula-judae (Judas ear fungus).